The chain runs to 300 residues: MKPLQTNFNLLTYLYERKEIVEDTLNKSIPRGNPTFIYDSIRYSLSAGGKRIRPILCLASCELAGGTMEMALPTACALEMIHTMSLIHDDLPAMDNDSYRRGKPTNHIIYGEDLAILAGDALLAYAFEFIATQTKNVPADLIVKVIAQVAHSVTTSGLVGGQIIDLSSEGKSDTTLETLNFIHIHKTGALLEAAVLSGALLAGAKEKDMNRFLRYAQNIGLAFQIIDDVLDIISTEEKLGKSIGKDLKTQKATYPSFWGVEESIKQAELLVEEAKEEILYFDNKAIPLIAIADFIVNRNN.

The isopentenyl diphosphate site is built by Lys50, Arg53, and His82. Mg(2+) contacts are provided by Asp89 and Asp95. Position 100 (Arg100) interacts with (2E,6E)-farnesyl diphosphate. Arg101 is a binding site for isopentenyl diphosphate. (2E,6E)-farnesyl diphosphate is bound by residues Lys186, Thr187, and Gln224.

It belongs to the FPP/GGPP synthase family. Mg(2+) serves as cofactor.

It localises to the plastid. The protein resides in the cyanelle. The catalysed reaction is isopentenyl diphosphate + (2E,6E)-farnesyl diphosphate = (2E,6E,10E)-geranylgeranyl diphosphate + diphosphate. It functions in the pathway isoprenoid biosynthesis; geranylgeranyl diphosphate biosynthesis; geranylgeranyl diphosphate from farnesyl diphosphate and isopentenyl diphosphate: step 1/1. Catalyzes the condensation of farnesyl diphosphate (FPP) and isopentenyl diphosphate (IPP) to yield geranylgeranyl diphosphate (GGPP) needed for biosynthesis of carotenoids and diterpenes. In Cyanophora paradoxa, this protein is Geranylgeranyl diphosphate synthase (crtE).